We begin with the raw amino-acid sequence, 135 residues long: Small ribosomal subunit protein bS16m/bS16c (135 aa).

Residues 1 to 7 constitute a chloroplast and mitochondrion transit peptide; that stretch reads MVVRIRL. The tract at residues 87–135 is disordered; the sequence is PMVAMGRKGGARDTRPVDPMTGRYVDAENKTVNANDNQPKEEDTEAKSA. Residues 124 to 135 are compositionally biased toward basic and acidic residues; it reads QPKEEDTEAKSA.

It belongs to the bacterial ribosomal protein bS16 family. As to quaternary structure, component of the mitochondrial ribosome small subunit. Expressed at low levels in flowers, and, to a lower extent, in leaves, stems and roots.

The protein resides in the mitochondrion. Its subcellular location is the plastid. The protein localises to the chloroplast. This chain is Small ribosomal subunit protein bS16m/bS16c, found in Arabidopsis thaliana (Mouse-ear cress).